The primary structure comprises 432 residues: Glutamyl-tRNA reductase (432 aa).

Substrate contacts are provided by residues 49–52, Ser-101, 106–108, and Gln-112; these read TCNR and ESQ. Cys-50 (nucleophile) is an active-site residue. 181 to 186 lines the NADP(+) pocket; the sequence is GAGETI. Residues 410–432 form a disordered region; it reads KPGYHHPTLQTTIVKTDETDPAS.

Belongs to the glutamyl-tRNA reductase family. In terms of assembly, homodimer.

It catalyses the reaction (S)-4-amino-5-oxopentanoate + tRNA(Glu) + NADP(+) = L-glutamyl-tRNA(Glu) + NADPH + H(+). It participates in porphyrin-containing compound metabolism; protoporphyrin-IX biosynthesis; 5-aminolevulinate from L-glutamyl-tRNA(Glu): step 1/2. Catalyzes the NADPH-dependent reduction of glutamyl-tRNA(Glu) to glutamate 1-semialdehyde (GSA). In Xylella fastidiosa (strain M23), this protein is Glutamyl-tRNA reductase.